We begin with the raw amino-acid sequence, 364 residues long: MTLTAERHDTAQPENAGVFERTDFPTDTAHEQVTFFQDPATGLKAIVAIHDTTLGPALGGTRFYPYADEAAALKDVLRLSRGMTYKSAIAGVDLGGGKAVIIGDPATGKSEALLEAYARFVQTLGGRYITAGDVGTNSDDLDVMGRATDYVVGRNTSAGGSGDSAPMTALGVFQGMRAAAQAKWGTASLAGRTVGVEGTGKVGYQLIKLLLADGASVVATDVNAAALDRVARDFPEVKIASSVIGQELDVYAPCAMGATLTDESVAAITAQVICGAANNQLAHPAVEHDLGERGITWVPDYVANGGGLIQVAGERLGTSADDVRAQVEKIFATVVQILDVAKRDGILAGAAADAVAEARIAAAR.

Arg62 contributes to the NAD(+) binding site. Lys86 serves as a coordination point for L-phenylalanine. Lys98 acts as the Proton donor/acceptor in catalysis. NAD(+) contacts are provided by residues Asp133, Ser164, Thr168, 255–256, and 276–278; these read AM and AAN. Position 278 (Asn278) interacts with L-phenylalanine.

The protein belongs to the Glu/Leu/Phe/Val dehydrogenases family.

It catalyses the reaction L-phenylalanine + NAD(+) + H2O = 3-phenylpyruvate + NH4(+) + NADH + H(+). It functions in the pathway amino-acid biosynthesis; L-phenylalanine biosynthesis; L-phenylalanine from phenylpyruvate (PDH route): step 1/1. Catalyzes the reversible NAD(+)-dependent oxidative deamination of L-phenylalanine to phenylpyruvate. This Rhodococcus jostii (strain RHA1) protein is Phenylalanine dehydrogenase.